The following is a 239-amino-acid chain: Probable transcriptional regulatory protein BCG9842_B4761 (239 aa).

This sequence belongs to the TACO1 family. YeeN subfamily.

It localises to the cytoplasm. The polypeptide is Probable transcriptional regulatory protein BCG9842_B4761 (Bacillus cereus (strain G9842)).